A 463-amino-acid chain; its full sequence is MTTETRSLYSQLPAIDRLLRDSSFLSLRDTYGHTRVVELLRQMLDEAREVIRGSQTLPAWCENWAQEVDARLTKEAQSALRPVINLTGTVLHTNLGRALQAEAAVEAVAQAMRSPVTLEYDLDDAGRGHRDRALAQLLRRITGAEDACIVNNNAAAVLLMLAATASGKEVVVSRGELVEIGGAFRIPDVMRQAGCTLHEVGTTNRTHANDYRQAVNENTALLMKVHTSNYSIQGFTKAIDEAELVALGKELDVPVVTDLGSGSLVDLSQYGLPKEPMPQELIAAGVSLVSFSGDKLLGGPQAGIIVGKKEMIARLQSHPLKRALRADKMTLAALEATLRLYLHPEALSEKLPTLRLLTRSAEVIQIQAQRLQAPLVAHYGAEFAVQVMPCLSQIGSGSLPVDRLPSAALTFTPHDGRGSHLESLAARWRELPVPVIGRIYDGRLWLDLRCLEDEQRFLEMLLK.

N6-(pyridoxal phosphate)lysine is present on K295.

Belongs to the SelA family. In terms of assembly, homodecamer; pentamer of dimers. Binds only one seryl-tRNA(Sec) per dimer. The cofactor is pyridoxal 5'-phosphate.

It localises to the cytoplasm. It catalyses the reaction L-seryl-tRNA(Sec) + selenophosphate + H(+) = L-selenocysteinyl-tRNA(Sec) + phosphate. It functions in the pathway aminoacyl-tRNA biosynthesis; selenocysteinyl-tRNA(Sec) biosynthesis; selenocysteinyl-tRNA(Sec) from L-seryl-tRNA(Sec) (bacterial route): step 1/1. Converts seryl-tRNA(Sec) to selenocysteinyl-tRNA(Sec) required for selenoprotein biosynthesis. In Shigella flexneri serotype 5b (strain 8401), this protein is L-seryl-tRNA(Sec) selenium transferase.